The following is a 931-amino-acid chain: Chitin synthase 7 (931 aa).

Disordered regions lie at residues 1 to 34 and 56 to 92; these read MVRHDPFTNSVSEDSSFTPSVNPSTPYPQSGHYR and GDVGYGGRSRRHGSWASVNNEDNEELTPLTTGPASSS. 2 stretches are compositionally biased toward polar residues: residues 7-28 and 83-92; these read FTNSVSEDSSFTPSVNPSTPYP and PLTTGPASSS. N536 is a glycosylation site (N-linked (GlcNAc...) asparagine). The next 3 membrane-spanning stretches (helical) occupy residues 573–593, 615–635, and 647–667; these read IFSLIFSWFALANLWLTFSII, INLVFAWVYLAFLMLQLVLAL, and ILTLWVYAFLSFYLIVCSIIL. An N-linked (GlcNAc...) asparagine glycan is attached at N691. Transmembrane regions (helical) follow at residues 695 to 715 and 725 to 745; these read GVLVAAIMSTIGIYLIASFLY and FPQYMLLAPSFTNVLNIYAFC. The disordered stretch occupies residues 763–789; sequence LPAISSSKQKDGETAVVEEQQRSQGEL. The N-linked (GlcNAc...) asparagine glycan is linked to N819. The helical transmembrane segment at 826–846 threads the bilayer; the sequence is LVVVWLLTNAALAISIQTLNG. 2 N-linked (GlcNAc...) asparagine glycosylation sites follow: N866 and N874. Residues 899–919 form a helical membrane-spanning segment; sequence AILWTTFALSMVRFIGCVFYW.

The protein belongs to the chitin synthase family. Class III subfamily.

The protein localises to the cell membrane. The catalysed reaction is [(1-&gt;4)-N-acetyl-beta-D-glucosaminyl](n) + UDP-N-acetyl-alpha-D-glucosamine = [(1-&gt;4)-N-acetyl-beta-D-glucosaminyl](n+1) + UDP + H(+). In terms of biological role, polymerizes chitin, a structural polymer of the cell wall and septum, by transferring the sugar moiety of UDP-GlcNAc to the non-reducing end of the growing chitin polymer. This chain is Chitin synthase 7, found in Cryptococcus neoformans var. grubii serotype A (strain H99 / ATCC 208821 / CBS 10515 / FGSC 9487) (Filobasidiella neoformans var. grubii).